A 602-amino-acid chain; its full sequence is Beta-(1--&gt;2)glucan export ATP-binding/permease protein NdvA (602 aa).

Residues 21–306 (GWLLAFANLL…VVSFINNVFM (286 aa)) enclose the ABC transmembrane type-1 domain. 6 helical membrane-spanning segments follow: residues 22–42 (WLLA…PVLF), 63–83 (FLAA…LVAL), 141–161 (EHFA…YLNW), 163–183 (LAIL…FVVR), 240–262 (VLSW…VLAI), and 280–300 (IVMF…VVSF). The 234-residue stretch at 340 to 573 (VEFNDVTFSY…GGHFAELARA (234 aa)) folds into the ABC transporter domain. Residue 373–380 (GPTGAGKS) participates in ATP binding.

This sequence belongs to the ABC transporter superfamily. Beta-(1--&gt;2)glucan exporter (TC 3.A.1.108.1) family. As to quaternary structure, homodimer.

The protein resides in the cell inner membrane. It catalyses the reaction [(1-&gt;2)-beta-D-glucosyl](n)(in) + ATP + H2O = [(1-&gt;2)-beta-D-glucosyl](n)(out) + ADP + phosphate + H(+). Its function is as follows. Involved in beta-(1--&gt;2)glucan export. Transmembrane domains (TMD) form a pore in the inner membrane and the ATP-binding domain (NBD) is responsible for energy generation. The protein is Beta-(1--&gt;2)glucan export ATP-binding/permease protein NdvA of Bradyrhizobium diazoefficiens (strain JCM 10833 / BCRC 13528 / IAM 13628 / NBRC 14792 / USDA 110).